The following is a 59-amino-acid chain: Large ribosomal subunit protein bL32 (59 aa).

Over residues Met1–Arg16 the composition is skewed to basic residues. Residues Met1–Glu59 form a disordered region. Positions Val28 to Leu44 are enriched in basic and acidic residues.

It belongs to the bacterial ribosomal protein bL32 family.

The chain is Large ribosomal subunit protein bL32 from Brucella abortus (strain S19).